The primary structure comprises 639 residues: Chaperone protein HtpG (639 aa).

The a; substrate-binding stretch occupies residues 1–347 (MSHQETHGFQ…SNDLPLNVSR (347 aa)). The interval 348–564 (EILQDNKITT…AGEMSSQMIK (217 aa)) is b. The segment at 565-639 (LMQAAGQAVT…MNKMLLASVK (75 aa)) is c.

It belongs to the heat shock protein 90 family. Homodimer.

It localises to the cytoplasm. Its function is as follows. Molecular chaperone. Has ATPase activity. The polypeptide is Chaperone protein HtpG (Shewanella loihica (strain ATCC BAA-1088 / PV-4)).